We begin with the raw amino-acid sequence, 537 residues long: Tegument protein BRRF2 (537 aa).

2 disordered regions span residues 325–474 (LALP…EAQD) and 486–537 (GLRV…LSVI). Polar residues predominate over residues 334–347 (KPQQTCSQLTSRGN). Residues 423–441 (SSQAAPSSSSVAPVASLSG) show a composition bias toward low complexity. Residues 492 to 517 (DEDEDGSEDGEFSDLDLSDSDHEGDE) show a composition bias toward acidic residues.

The protein belongs to the lymphocryptovirus BRRF2 family.

It is found in the virion tegument. The chain is Tegument protein BRRF2 from Homo sapiens (Human).